Here is a 492-residue protein sequence, read N- to C-terminus: 5-taurinomethyluridine-[tRNA] synthase subunit GTPB3, mitochondrial (492 aa).

The N-terminal 20 residues, 1–20 (MWRGLWTLAAQAARGPRRLC), are a transit peptide targeting the mitochondrion. 3 residues coordinate 5,10-methylenetetrahydrofolate: arginine 52, glutamate 112, and lysine 152. The 168-residue stretch at 249 to 416 (GVHVVVTGPP…LLEALRKELA (168 aa)) folds into the TrmE-type G domain. Residues 256–263 (GPPNAGKS), 282–286 (GTTRD), 303–306 (DTAG), 374–377 (NKSD), and 397–399 (SCL) contribute to the GTP site. Residue asparagine 259 coordinates K(+). Positions 263 and 284 each coordinate Mg(2+). Lysine 492 provides a ligand contact to 5,10-methylenetetrahydrofolate.

This sequence belongs to the TRAFAC class TrmE-Era-EngA-EngB-Septin-like GTPase superfamily. TrmE GTPase family. As to quaternary structure, homodimer; forms a dimer in the presence of potassium. Interacts with MTO1; forms the GTPBP3-MTO1 complex composed of homodimers of GTPBP3 and MTO1. Homodimer, forms homodimer in vivo. Requires K(+) as cofactor. As to expression, ubiquitously expressed.

Its subcellular location is the mitochondrion. The protein localises to the cytoplasm. It catalyses the reaction GTP + H2O = GDP + phosphate + H(+). GTPase component of the GTPBP3-MTO1 complex that catalyzes the 5-taurinomethyluridine (taum(5)U) modification at the 34th wobble position (U34) of mitochondrial tRNAs (mt-tRNAs), which plays a role in mt-tRNA decoding and mitochondrial translation. Taum(5)U formation on mammalian mt-tRNA requires the presence of both GTPBP3-mediated GTPase activity and MTO1 catalytic activity. The polypeptide is 5-taurinomethyluridine-[tRNA] synthase subunit GTPB3, mitochondrial (Homo sapiens (Human)).